The chain runs to 246 residues: 5'-nucleotidase SurE (246 aa).

Aspartate 8, aspartate 9, serine 39, and asparagine 91 together coordinate a divalent metal cation.

The protein belongs to the SurE nucleotidase family. A divalent metal cation is required as a cofactor.

The protein localises to the cytoplasm. It catalyses the reaction a ribonucleoside 5'-phosphate + H2O = a ribonucleoside + phosphate. Nucleotidase that shows phosphatase activity on nucleoside 5'-monophosphates. The chain is 5'-nucleotidase SurE from Mannheimia succiniciproducens (strain KCTC 0769BP / MBEL55E).